Reading from the N-terminus, the 526-residue chain is Peptide chain release factor 3 (526 aa).

One can recognise a tr-type G domain in the interval 9-277; the sequence is DKRRTFAIIS…GIVEWAPKPL (269 aa). GTP contacts are provided by residues 18 to 25, 86 to 90, and 140 to 143; these read SHPDAGKT, DTPGH, and NKLD.

Belongs to the TRAFAC class translation factor GTPase superfamily. Classic translation factor GTPase family. PrfC subfamily.

The protein localises to the cytoplasm. Its function is as follows. Increases the formation of ribosomal termination complexes and stimulates activities of RF-1 and RF-2. It binds guanine nucleotides and has strong preference for UGA stop codons. It may interact directly with the ribosome. The stimulation of RF-1 and RF-2 is significantly reduced by GTP and GDP, but not by GMP. The polypeptide is Peptide chain release factor 3 (Shewanella putrefaciens (strain CN-32 / ATCC BAA-453)).